We begin with the raw amino-acid sequence, 358 residues long: Methylthioribose-1-phosphate isomerase (358 aa).

Position 1 is an N-acetylmethionine (M1). The active-site Proton donor is the D248.

This sequence belongs to the eIF-2B alpha/beta/delta subunits family. MtnA subfamily.

Its subcellular location is the cytoplasm. The protein localises to the nucleus. It catalyses the reaction 5-(methylsulfanyl)-alpha-D-ribose 1-phosphate = 5-(methylsulfanyl)-D-ribulose 1-phosphate. It participates in amino-acid biosynthesis; L-methionine biosynthesis via salvage pathway; L-methionine from S-methyl-5-thio-alpha-D-ribose 1-phosphate: step 1/6. Catalyzes the interconversion of methylthioribose-1-phosphate (MTR-1-P) into methylthioribulose-1-phosphate (MTRu-1-P). This is Methylthioribose-1-phosphate isomerase from Bos taurus (Bovine).